Reading from the N-terminus, the 65-residue chain is Large ribosomal subunit protein bL35 (65 aa).

The protein belongs to the bacterial ribosomal protein bL35 family.

In Phytoplasma mali (strain AT), this protein is Large ribosomal subunit protein bL35.